We begin with the raw amino-acid sequence, 186 residues long: Interferon beta-2 (186 aa).

An N-terminal signal peptide occupies residues Met1–Ser21. A disulfide bridge connects residues Cys52 and Cys161. 2 N-linked (GlcNAc...) asparagine glycosylation sites follow: Asn131 and Asn173.

The protein belongs to the alpha/beta interferon family. In terms of assembly, monomer.

The protein localises to the secreted. In terms of biological role, has antiviral, antibacterial and anticancer activities. This chain is Interferon beta-2 (IFNB2), found in Bos taurus (Bovine).